The chain runs to 249 residues: Protein twisted gastrulation (249 aa).

The signal sequence occupies residues 1-23 (MQLLCYFVILFVGIAPWSSLAND). N-linked (GlcNAc...) asparagine glycosylation is present at Asn199.

It belongs to the twisted gastrulation protein family. In terms of assembly, component of a complex composed of dpp, sog and tsg. As to expression, first appears in stage 4 embryos, expressed in two domains: a broad mid-dorsal saddle and an anterior cap, expression between the domains is continuous across the dorsal midline. At stage 5, expression is refined into 4 graded stripes in the mid-dorsal region and a paired domain in the anterior region. During stages 7 and 8, anterior expression fades and the mid dorsal stripes are located between the anterior and posterior transverse furrow (ATF and PTF). Expressing cells become incorporated into the deepening PTF.

The protein resides in the secreted. Functionally, involved in dorsal-ventral patterning. Required for specification of a narrow strip of dorsal midline cells that will give rise to the amnioserosa, but not for specification of dorsal ectoderm cells. Inhibits BMP signaling; enhances the binding of sog to dpp, thus enhancing the antagonistic activity of sog. The protein is Protein twisted gastrulation (tsg) of Drosophila melanogaster (Fruit fly).